The following is a 559-amino-acid chain: S-layer protein (559 aa).

Residues M1–A28 form the signal peptide. N-linked (GlcNAc...) asparagine glycosylation is found at N108, N130, N155, N222, and N373.

The protein belongs to the Mj S-layer protein family.

It localises to the secreted. The protein localises to the cell wall. Its subcellular location is the S-layer. Functionally, S-layer protein. The S-layer is a paracrystalline mono-layered assembly of proteins which coat the surface of the cell. This is S-layer protein from Methanothermococcus thermolithotrophicus (Methanococcus thermolithotrophicus).